The primary structure comprises 356 residues: Cyanide hydratase (356 aa).

Positions 8–287 constitute a CN hydrolase domain; it reads YKAAAVNAEP…EGLLFVDIDL (280 aa). The Proton acceptor role is filled by Glu48. Lys130 is an active-site residue. The active-site Nucleophile is the Cys165.

Belongs to the carbon-nitrogen hydrolase superfamily. Nitrilase family. Oligomer of dimers, forming left-handed helical fibers.

It catalyses the reaction formamide = hydrogen cyanide + H2O. In terms of biological role, catalyzes the hydration of cyanide to formamide. Degradation of cyanide may be important for plant pathogenic fungi in infection of cyanogenic plants. Can also transform some nitriles like 2-cyanopyridine and fumaronitrile. This is Cyanide hydratase from Aspergillus niger.